A 449-amino-acid chain; its full sequence is Ras-related GTP-binding protein D (449 aa).

The disordered stretch occupies residues 1-55; it reads MSQVLGKPQPQGEDGGEDQEEDELVGLAGYEDGPESSDAELDSGPEEGESRRNSW. Acidic residues-rich tracts occupy residues 14-24 and 32-47; these read DGGEDQEEDEL and DGPESSDAELDSGPEE. GTP-binding residues include R120, R121, S122, G123, K124, S125, S126, and T140. Residues R121, S122, G123, K124, S125, S126, T140, E144, and T146 each contribute to the GDP site. The GTP site is built by T146, G169, H228, K229, and D231. 5 residues coordinate GDP: H228, K229, D231, S269, and I270. Position 270 (I270) interacts with GTP. Positions 428-449 are disordered; that stretch reads KAQSRLPKKTGATPNGTPRVLL.

The protein belongs to the GTR/RAG GTP-binding protein family. As to quaternary structure, forms a heterodimer with RRAGA in a sequence-independent manner and RRAGB. Heterodimerization stabilizes RRAG proteins. The GDP-bound form of RRAGD (in complex with the GTP-bound form of RRAGA or RRAGB), interacts with RPTOR, thereby promoting recruitment of mTORC1 to the lysosomes. Component of the lysosomal folliculin complex (LFC), composed of FLCN, FNIP1 (or FNIP2), RagA/RRAGA or RagB/RRAGB GDP-bound, RagC/RRAGC or RagD/RRAGD GTP-bound, and Ragulator. Interacts with NOL8. Interacts with SH3BP4; the interaction with this negative regulator is most probably direct, preferentially occurs with the inactive GDP-bound form of RRAGD and is negatively regulated by amino acids. The Rag heterodimer interacts with SLC38A9; the probable amino acid sensor. Interacts with SESN1, SESN2 and SESN3. The GDP-bound form interacts with TFEB. The GDP-bound form interacts with TFE3. As to expression, expressed in the distal tubule of the kidney.

It is found in the cytoplasm. It localises to the nucleus. Its subcellular location is the lysosome membrane. It catalyses the reaction GTP + H2O = GDP + phosphate + H(+). With respect to regulation, the activation of RagD/RRAGD is mediated by a GTPase activating protein (GAP). In high-amino acid conditions, activated by GTPase activating protein FLCN that stimulates RRAGD GTPase activity to turn it into its active GDP-bound form. In response to amino acid depletion, the GATOR1 complex inactivates RagC/RRAGC by securing the GTP-bound inactive form. In terms of biological role, guanine nucleotide-binding protein that plays a crucial role in the cellular response to amino acid availability through regulation of the mTORC1 signaling cascade. Forms heterodimeric Rag complexes with RagA/RRAGA or RagB/RRAGB and cycles between an inactive GTP-bound and an active GDP-bound form: RagD/RRAGD is in its active form when GDP-bound RagD/RRAGD forms a complex with GTP-bound RagA/RRAGA (or RagB/RRAGB) and in an inactive form when GTP-bound RagD/RRAGD heterodimerizes with GDP-bound RagA/RRAGA (or RagB/RRAGB). In its active form, promotes the recruitment of mTORC1 to the lysosomes and its subsequent activation by the GTPase RHEB. This is a crucial step in the activation of the MTOR signaling cascade by amino acids. Also plays a central role in the non-canonical mTORC1 complex, which acts independently of RHEB and specifically mediates phosphorylation of MiT/TFE factors TFEB and TFE3: GDP-bound RagD/RRAGD mediates recruitment of MiT/TFE factors TFEB and TFE3. The chain is Ras-related GTP-binding protein D from Mus musculus (Mouse).